Consider the following 406-residue polypeptide: Arginine biosynthesis bifunctional protein ArgJ (406 aa).

Substrate contacts are provided by Thr-156, Lys-182, Thr-193, Glu-279, Asn-401, and Thr-406. Catalysis depends on Thr-193, which acts as the Nucleophile.

It belongs to the ArgJ family. In terms of assembly, heterotetramer of two alpha and two beta chains.

The protein resides in the cytoplasm. The catalysed reaction is N(2)-acetyl-L-ornithine + L-glutamate = N-acetyl-L-glutamate + L-ornithine. It carries out the reaction L-glutamate + acetyl-CoA = N-acetyl-L-glutamate + CoA + H(+). The protein operates within amino-acid biosynthesis; L-arginine biosynthesis; L-ornithine and N-acetyl-L-glutamate from L-glutamate and N(2)-acetyl-L-ornithine (cyclic): step 1/1. It functions in the pathway amino-acid biosynthesis; L-arginine biosynthesis; N(2)-acetyl-L-ornithine from L-glutamate: step 1/4. Feedback inhibition by L-arginine. In terms of biological role, catalyzes two activities which are involved in the cyclic version of arginine biosynthesis: the synthesis of N-acetylglutamate from glutamate and acetyl-CoA as the acetyl donor, and of ornithine by transacetylation between N(2)-acetylornithine and glutamate. The polypeptide is Arginine biosynthesis bifunctional protein ArgJ (Bacillus amyloliquefaciens (Bacillus velezensis)).